The sequence spans 324 residues: 26S proteasome non-ATPase regulatory subunit 7 (324 aa).

Residues 9-144 form the MPN domain; sequence VVVHPLVLLS…TEAYISVEEV (136 aa). Lys180 is covalently cross-linked (Glycyl lysine isopeptide (Lys-Gly) (interchain with G-Cter in ubiquitin)). An N6-acetyllysine mark is found at Lys204, Lys214, Lys316, and Lys317. The disordered stretch occupies residues 281-324; it reads ANRDAEKKEGQEKEESKKDRKEDKEKDKDKEKSDVKKEEKKEKK.

The protein belongs to the peptidase M67A family. As to quaternary structure, component of the 19S proteasome regulatory particle complex. The 26S proteasome consists of a 20S core particle (CP) and two 19S regulatory subunits (RP). The regulatory particle is made of a lid composed of 9 subunits including PSMD7, a base containing 6 ATPases and few additional components. Within the complex, PSMD7 interacts with subunit PSMD4 through their respective MPN domain. Interacts with TRIM5.

Its function is as follows. Component of the 26S proteasome, a multiprotein complex involved in the ATP-dependent degradation of ubiquitinated proteins. This complex plays a key role in the maintenance of protein homeostasis by removing misfolded or damaged proteins, which could impair cellular functions, and by removing proteins whose functions are no longer required. Therefore, the proteasome participates in numerous cellular processes, including cell cycle progression, apoptosis, or DNA damage repair. The chain is 26S proteasome non-ATPase regulatory subunit 7 (PSMD7) from Homo sapiens (Human).